Reading from the N-terminus, the 783-residue chain is Na(+)/H(+) exchanger protein 7 (783 aa).

The helical transmembrane segment at M1–G18 threads the bilayer. At L19–L108 the chain is on the extracellular side. The helical transmembrane segment at V109–V129 threads the bilayer. At T130 to K132 the chain is on the cytoplasmic side. Residues I133–G153 traverse the membrane as a helical segment. Residues D154–S159 lie on the Extracellular side of the membrane. A helical transmembrane segment spans residues I160–L180. Residues E181 to T206 are Cytoplasmic-facing. A helical transmembrane segment spans residues I207–G227. Over K228–D235 the chain is Extracellular. A helical transmembrane segment spans residues I236–Q256. At E257 to K262 the chain is on the cytoplasmic side. The chain crosses the membrane as a helical span at residues M263 to Y283. The Extracellular portion of the chain corresponds to N284 to H299. A helical transmembrane segment spans residues G300–I320. The Cytoplasmic portion of the chain corresponds to C321–A350. A helical transmembrane segment spans residues Y351–F371. Topologically, residues Q372–Y390 are extracellular. An N-linked (GlcNAc...) asparagine glycan is attached at N379. Positions I391 to L411 form an intramembrane region, helical. Residues V412–P424 lie on the Extracellular side of the membrane. The chain crosses the membrane as a helical span at residues V425–L445. Topologically, residues T446 to Q464 are cytoplasmic. The chain crosses the membrane as a helical span at residues F465–S485. Topologically, residues A486–N492 are extracellular. Residues T493–I513 traverse the membrane as a helical segment. Over K514–F783 the chain is Cytoplasmic. A coiled-coil region spans residues D649–A702. The tract at residues R745–F783 is disordered.

Belongs to the monovalent cation:proton antiporter 1 (CPA1) transporter (TC 2.A.36) family. Interacts (via C-terminus) with cmd-1. Detected in the posterior cells of the intestine.

The protein resides in the basolateral cell membrane. Functionally, na+/H+ exchanger which mediates the transient acidification of the coelomic space and plays a role in contraction of posterior body muscles during defecation. Probably by regulating the defecation motor program, required for fatty acid uptake by intestinal cells. This chain is Na(+)/H(+) exchanger protein 7, found in Caenorhabditis elegans.